Consider the following 492-residue polypeptide: Catalase-3 (492 aa).

Active-site residues include H65 and N138. Y348 provides a ligand contact to heme.

The protein belongs to the catalase family. Homotetramer and heterotetramer. At least six or seven isozymes are produced from a mixture of 3 gene products. Interacts with NCA1. Interacts with LSD1. It depends on heme as a cofactor.

Its subcellular location is the peroxisome. The catalysed reaction is 2 H2O2 = O2 + 2 H2O. Occurs in almost all aerobically respiring organisms and serves to protect cells from the toxic effects of hydrogen peroxide. The protein is Catalase-3 (CAT3) of Arabidopsis thaliana (Mouse-ear cress).